A 342-amino-acid polypeptide reads, in one-letter code: Autoinducer 2 import system permease protein LsrC (342 aa).

Over methionine 1–alanine 13 the chain is Periplasmic. A helical membrane pass occupies residues leucine 14–valine 34. Over glutamine 35–threonine 38 the chain is Cytoplasmic. The helical transmembrane segment at methionine 39 to leucine 59 threads the bilayer. Residues threonine 60–serine 69 lie on the Periplasmic side of the membrane. A helical transmembrane segment spans residues isoleucine 70–valine 90. Over alanine 91–cysteine 92 the chain is Cytoplasmic. Residues valine 93–leucine 113 traverse the membrane as a helical segment. Position 114 (lysine 114) is a topological domain, periplasmic. The chain crosses the membrane as a helical span at residues isoleucine 115–tryptophan 135. The Cytoplasmic portion of the chain corresponds to threonine 136–proline 154. Residues leucine 155 to tryptophan 175 traverse the membrane as a helical segment. At leucine 176–serine 212 the chain is on the periplasmic side. A helical transmembrane segment spans residues leucine 213–proline 233. The Cytoplasmic segment spans residues asparagine 234–glycine 251. Residues glycine 252–leucine 272 traverse the membrane as a helical segment. Over threonine 273–arginine 283 the chain is Periplasmic. Residues isoleucine 284–aspartate 304 traverse the membrane as a helical segment. At glycine 305–alanine 342 the chain is on the cytoplasmic side.

It belongs to the binding-protein-dependent transport system permease family. AraH/RbsC subfamily. In terms of assembly, the complex is composed of two ATP-binding proteins (LsrA), two transmembrane proteins (LsrC and LsrD) and a solute-binding protein (LsrB).

It is found in the cell inner membrane. Its function is as follows. Part of the ABC transporter complex LsrABCD involved in autoinducer 2 (AI-2) import. Probably responsible for the translocation of the substrate across the membrane. This Escherichia coli O157:H7 protein is Autoinducer 2 import system permease protein LsrC (lsrC).